Reading from the N-terminus, the 62-residue chain is Large ribosomal subunit protein uL29 (62 aa).

Belongs to the universal ribosomal protein uL29 family.

The protein is Large ribosomal subunit protein uL29 of Vesicomyosocius okutanii subsp. Calyptogena okutanii (strain HA).